A 322-amino-acid polypeptide reads, in one-letter code: Acetyl-coenzyme A carboxylase carboxyl transferase subunit alpha (322 aa).

Residues 30–293 form the CoA carboxyltransferase C-terminal domain; it reads ALDISAEIAR…KQTLQESLRK (264 aa).

This sequence belongs to the AccA family. In terms of assembly, acetyl-CoA carboxylase is a heterohexamer composed of biotin carboxyl carrier protein (AccB), biotin carboxylase (AccC) and two subunits each of ACCase subunit alpha (AccA) and ACCase subunit beta (AccD).

The protein resides in the cytoplasm. The enzyme catalyses N(6)-carboxybiotinyl-L-lysyl-[protein] + acetyl-CoA = N(6)-biotinyl-L-lysyl-[protein] + malonyl-CoA. It functions in the pathway lipid metabolism; malonyl-CoA biosynthesis; malonyl-CoA from acetyl-CoA: step 1/1. Component of the acetyl coenzyme A carboxylase (ACC) complex. First, biotin carboxylase catalyzes the carboxylation of biotin on its carrier protein (BCCP) and then the CO(2) group is transferred by the carboxyltransferase to acetyl-CoA to form malonyl-CoA. The chain is Acetyl-coenzyme A carboxylase carboxyl transferase subunit alpha from Nitrosomonas europaea (strain ATCC 19718 / CIP 103999 / KCTC 2705 / NBRC 14298).